Consider the following 226-residue polypeptide: MADEKNKPENPDLDQRDINNPRDREALKQAADDFLKARRAEAAADEAEGEVDETANRIAVLEADNTELKDQMLRVAAEMENLRKRTQRDVQDARAYAITNFARDMLSVSDNLRRALDAIPADALEADSNLKSLSEGVEMTERAMLLALERHGVKKLEPEGQKFDPNFHQAMFEVPNPDLPNNTVVQVVQAGYAIGDRVLRPAMVGVSKGGPKVSAENGASTSEDNA.

Disordered regions lie at residues 1 to 24 (MADEKNKPENPDLDQRDINNPRDR) and 205 to 226 (GVSKGGPKVSAENGASTSEDNA). Polar residues predominate over residues 217-226 (NGASTSEDNA).

The protein belongs to the GrpE family. Homodimer.

Its subcellular location is the cytoplasm. Participates actively in the response to hyperosmotic and heat shock by preventing the aggregation of stress-denatured proteins, in association with DnaK and GrpE. It is the nucleotide exchange factor for DnaK and may function as a thermosensor. Unfolded proteins bind initially to DnaJ; upon interaction with the DnaJ-bound protein, DnaK hydrolyzes its bound ATP, resulting in the formation of a stable complex. GrpE releases ADP from DnaK; ATP binding to DnaK triggers the release of the substrate protein, thus completing the reaction cycle. Several rounds of ATP-dependent interactions between DnaJ, DnaK and GrpE are required for fully efficient folding. This is Protein GrpE from Brucella melitensis biotype 1 (strain ATCC 23456 / CCUG 17765 / NCTC 10094 / 16M).